The following is a 400-amino-acid chain: Chaperone protein DnaJ (400 aa).

One can recognise a J domain in the interval D4–G69. The CR-type zinc-finger motif lies at G156 to E237. Zn(2+) is bound by residues C169, C172, C185, C188, C211, C214, C225, and C228. CXXCXGXG motif repeat units lie at residues C169–G176, C185–G192, C211–G218, and C225–G232.

Belongs to the DnaJ family. As to quaternary structure, homodimer. The cofactor is Zn(2+).

The protein localises to the cytoplasm. Participates actively in the response to hyperosmotic and heat shock by preventing the aggregation of stress-denatured proteins and by disaggregating proteins, also in an autonomous, DnaK-independent fashion. Unfolded proteins bind initially to DnaJ; upon interaction with the DnaJ-bound protein, DnaK hydrolyzes its bound ATP, resulting in the formation of a stable complex. GrpE releases ADP from DnaK; ATP binding to DnaK triggers the release of the substrate protein, thus completing the reaction cycle. Several rounds of ATP-dependent interactions between DnaJ, DnaK and GrpE are required for fully efficient folding. Also involved, together with DnaK and GrpE, in the DNA replication of plasmids through activation of initiation proteins. This Chlorobium chlorochromatii (strain CaD3) protein is Chaperone protein DnaJ.